A 301-amino-acid polypeptide reads, in one-letter code: uncharacterized protein (301 aa).

3 residues coordinate a divalent metal cation: glutamate 146, glutamate 148, and aspartate 177.

It belongs to the FAH family.

This is an uncharacterized protein from Staphylococcus haemolyticus (strain JCSC1435).